Here is a 218-residue protein sequence, read N- to C-terminus: Ras-related protein Rab11E (218 aa).

20–27 (GDSGVGKS) contacts GTP. An Effector region motif is present at residues 42–50 (SKSTIGVEF). GTP contacts are provided by residues 68 to 72 (DTAGQ) and 126 to 129 (NKSD). S-geranylgeranyl cysteine attachment occurs at residues Cys215 and Cys216.

Belongs to the small GTPase superfamily. Rab family.

Its subcellular location is the cell membrane. This chain is Ras-related protein Rab11E (RAB11E), found in Lotus japonicus (Lotus corniculatus var. japonicus).